The chain runs to 378 residues: MHLTHLSLVDFRSYPSLDLTLGPGVVTLVGRNGQGKTNLIEAIGYVATLASHRVSADAPLVRQGASHAVVRARIVRGDRAALVELEIVPGRANRARLNRAPVPRPRDVLGLLCTVLFAPEDLALVKGDPAGRRQFLDELLVARTPRMAAVLADYDRVLKQRSTLLRTAGAARRAGGKGDLRTLDVWDGYLASYGAELLTARLALVEALRPGVAGAYAAVAGAQAAVGFEYRASVPQPAPDPVRPDRERWEEAIRAELVAARPREIERGQTLVGPHRDDLLLTVDGLPARGYASHGESWSLALALRLASFELLRADDREPVLLLDDVFAELDVQRRSRLAELVAPAEQVLVTAAVEADVPAELTGTRYVVAAGEVLRAS.

30–37 is an ATP binding site; the sequence is GRNGQGKT.

The protein belongs to the RecF family.

The protein localises to the cytoplasm. In terms of biological role, the RecF protein is involved in DNA metabolism; it is required for DNA replication and normal SOS inducibility. RecF binds preferentially to single-stranded, linear DNA. It also seems to bind ATP. This Frankia alni (strain DSM 45986 / CECT 9034 / ACN14a) protein is DNA replication and repair protein RecF.